The primary structure comprises 267 residues: C-type lectin domain family 12 member A (267 aa).

Residues Met1 to Val43 are Cytoplasmic-facing. Residues Ile5–Leu10 carry the ITIM motif motif. Phosphotyrosine is present on Tyr7. Residues Leu44–Phe64 form a helical; Signal-anchor for type II membrane protein membrane-spanning segment. Over Tyr65–Arg267 the chain is Extracellular. 2 N-linked (GlcNAc...) asparagine glycosylation sites follow: Asn98 and Asn105. Cystine bridges form between Cys118/Cys130, Cys133/Cys144, Cys161/Cys246, and Cys225/Cys238. One can recognise a C-type lectin domain in the interval Tyr140–Glu247. Residue Asn165 is glycosylated (N-linked (GlcNAc...) asparagine).

Homodimer; disulfide-linked. Interacts (when the ITIM motif is phosphorylated) with PTPN6 and PTPN11. Post-translationally, phosphorylated at Tyr-7 by SRC in the ITIM motif following ligand-binding, promoting recruitment of tyrosine-protein phosphatases PTPN6 and PTPN11. As to expression, mainly expressed in lymphoid tissues. Preferentially expressed in peripheral blood leukocytes; less frequent in thymus, spleen, heart, brain and lung; and undetectable in other tissues.

The protein localises to the cell membrane. Functionally, myeloid inhibitory C-type lectin receptor that acts as a negative regulator of myeloid cell activation. Myeloid cell inhibition is required to limit proinflammatory pathways and protect against excessive inflammation. Specifically recognizes and binds various structures, such as neutrophil extracellular traps (NETs) or monosodium urate crystals. Also acts as a pattern-recognition receptor for pathogen-associated molecules, such as plasmodium hemozoin or mycobacterial micolic acid. Ligand-binding induces phosphorylation of its ITIM motif, followed by recruitment of tyrosine-protein phosphatases PTPN6 and PTPN11, which counteract tyrosine-protein kinase SYK, thereby preventing myeloid cell activation. Acts as a pattern-recognition receptor for NETs in neutrophils: specifically recognizes DNA in NETs, leading to inhibit neutrophil activation and limit further NET formation. This regulation is essential for controlling key neutrophil responses and limit NET-mediated inflammatory conditions. Also recognizes dead cells by acting as a receptor for monosodium urate crystals, leading to down-regulate neutrophil activation. Binding to monosodium urate crystals also promotes the type I interferon response. Acts as an inhibitor of natural killer (NK) cell cytotoxicity. Also acts as an ihibitor of dendritic cell maturation in an IL10-dependent manner. In Mus musculus (Mouse), this protein is C-type lectin domain family 12 member A.